The primary structure comprises 287 residues: Beta-lactamase GES-5 (287 aa).

The first 18 residues, 1–18 (MRFIHALLLAGIAHSAYA), serve as a signal peptide directing secretion. Cysteines 63 and 233 form a disulfide. Catalysis depends on Ser64, which acts as the Nucleophile; acyl-ester intermediate. Residues Ser64, Ser125, Asn127, Thr230, Thr232, and Arg238 each coordinate imipenem.

It belongs to the class-A beta-lactamase family.

It localises to the secreted. The catalysed reaction is a beta-lactam + H2O = a substituted beta-amino acid. Inhibited by the beta-lactamase-blocking agents clavulanic acid, sulbactam and tazobactam, via a covalent binding to Ser-64. Functionally, confers resistance to penicillins, cephalosporins and carbapenems. Has carbapenem-hydrolyzing activity. The protein is Beta-lactamase GES-5 of Klebsiella pneumoniae.